We begin with the raw amino-acid sequence, 311 residues long: MSSQNAKSIGGILETSTVPLVIQPQIVNDPAQNNITLPITLCAVCGDTSNGNHYGVPTCFGCSGFFRRTVRNKLVHGCWNGDGNCVIDKANRNRCKSCRIKKCFKKGMNKNAVQPERTSHSYTVEYVELPSFREYSKGLLPTHSDRLRFQHEHAQHEIDTSSVLVHLKNALQWVQQFSLFAVLSDVEKSQIILTQWPHLLCLALFENSEKIFIDEKFAQLAEKFKSLELSAQDYFLLKGIIIFTETKDGTDLKFDRQLDICIGLLNQLHLESSKSKSGRLLFLLGELKSYSTRQLESLLDLKACEIVISFL.

A DNA-binding region (nuclear receptor) is located at residues 39–115 (ITLCAVCGDT…KGMNKNAVQP (77 aa)). 2 consecutive NR C4-type zinc fingers follow at residues 42–62 (CAVC…CFGC) and 78–98 (CWNG…CKSC). The region spanning 116 to 311 (ERTSHSYTVE…KACEIVISFL (196 aa)) is the NR LBD domain.

It belongs to the nuclear hormone receptor family.

It is found in the nucleus. Its function is as follows. Orphan nuclear receptor. In Caenorhabditis elegans, this protein is Nuclear hormone receptor family member nhr-111 (nhr-111).